Here is a 519-residue protein sequence, read N- to C-terminus: ATP synthase subunit alpha (519 aa).

An ATP-binding site is contributed by 174-181; sequence GDRQTGKT.

Belongs to the ATPase alpha/beta chains family. In terms of assembly, F-type ATPases have 2 components, CF(1) - the catalytic core - and CF(0) - the membrane proton channel. CF(1) has five subunits: alpha(3), beta(3), gamma(1), delta(1), epsilon(1). CF(0) has three main subunits: a(1), b(2) and c(9-12). The alpha and beta chains form an alternating ring which encloses part of the gamma chain. CF(1) is attached to CF(0) by a central stalk formed by the gamma and epsilon chains, while a peripheral stalk is formed by the delta and b chains.

It is found in the cell inner membrane. It carries out the reaction ATP + H2O + 4 H(+)(in) = ADP + phosphate + 5 H(+)(out). Functionally, produces ATP from ADP in the presence of a proton gradient across the membrane. The alpha chain is a regulatory subunit. This is ATP synthase subunit alpha from Acidovorax ebreus (strain TPSY) (Diaphorobacter sp. (strain TPSY)).